A 359-amino-acid polypeptide reads, in one-letter code: Cytoplasmic tRNA 2-thiolation protein 1 (359 aa).

The protein belongs to the TtcA family. CTU1/NCS6/ATPBD3 subfamily. Interacts with NCS2 and URM1. May act by forming a heterodimer with NCS2. Component of a large molecular weight complex of more than 250 kDa.

It is found in the cytoplasm. The protein resides in the mitochondrion. It participates in tRNA modification; 5-methoxycarbonylmethyl-2-thiouridine-tRNA biosynthesis. In terms of biological role, plays a central role in 2-thiolation of mcm(5)S(2)U at tRNA wobble positions of tRNA(Lys), tRNA(Glu) and tRNA(Gln). Directly binds tRNAs and probably acts by catalyzing adenylation of tRNAs, an intermediate required for 2-thiolation. It is unclear whether it acts as a sulfurtransferase that transfers sulfur from thiocarboxylated URM1 onto the uridine of tRNAs at wobble position. Prior mcm(5) tRNA modification by the elongator complex is required for 2-thiolation. May also be involved in protein urmylation. May also be involved in protein urmylation and in invasive and pseudohyphal growth. This chain is Cytoplasmic tRNA 2-thiolation protein 1, found in Saccharomyces cerevisiae (strain ATCC 204508 / S288c) (Baker's yeast).